We begin with the raw amino-acid sequence, 226 residues long: METVVIVAIGVLATIFLASFAALVVVCRQRYCRPRDLLQRYDSKPIVDLIGAMETQSEPSELELDDVVITNPHIEAILENEDWIEDASGLMSHCIAILKICHTLTEKLVAMTMGSGAKMKTSASVSDIIVVAKRISPRVDDVVKSMYPPLDPKLLDARTTALLLSVSHLVLVTRNACHLTGGLDWIDQSLSAAEEHLEVLREAALASEPDKSLPNPEGFLQEQSAI.

Residues 1 to 3 (MET) are Cytoplasmic-facing. Positions 1–88 (METVVIVAIG…ENEDWIEDAS (88 aa)) are required for interaction with MYRF. A helical transmembrane segment spans residues 4 to 24 (VVIVAIGVLATIFLASFAALV). The Extracellular segment spans residues 25–226 (VVCRQRYCRP…EGFLQEQSAI (202 aa)). The tract at residues 207-226 (SEPDKSLPNPEGFLQEQSAI) is disordered.

The protein belongs to the TMEM98 family. In terms of assembly, interacts (via N-terminal region) with MYRF; the interaction inhibits MYRF self-cleavage. Expressed in differentiated oligodendrocytes in early postanatal central nervous system tissues. Expressed by CD4(+) T cells, the expression increases upon activation (at protein level).

It localises to the endoplasmic reticulum membrane. Its subcellular location is the cell membrane. The protein resides in the secreted. It is found in the extracellular exosome. In terms of biological role, functions as a negative regulator of MYRF in oligodendrocyte differentiation and myelination. Interacts with the C-terminal of MYRF inhibiting MYRF self-cleavage and N-fragment nuclear translocation. The secreted form promotes differentiation of T helper 1 cells (Th1). The sequence is that of Transmembrane protein 98 (Tmem98) from Mus musculus (Mouse).